The chain runs to 253 residues: Triosephosphate isomerase (253 aa).

8–10 (NWK) contributes to the substrate binding site. His93 functions as the Electrophile in the catalytic mechanism. The active-site Proton acceptor is the Glu165. Residues Gly171, Ser210, and 231–232 (GG) contribute to the substrate site.

Belongs to the triosephosphate isomerase family. As to quaternary structure, homodimer.

The protein resides in the cytoplasm. It carries out the reaction D-glyceraldehyde 3-phosphate = dihydroxyacetone phosphate. The protein operates within carbohydrate biosynthesis; gluconeogenesis. It functions in the pathway carbohydrate degradation; glycolysis; D-glyceraldehyde 3-phosphate from glycerone phosphate: step 1/1. Functionally, involved in the gluconeogenesis. Catalyzes stereospecifically the conversion of dihydroxyacetone phosphate (DHAP) to D-glyceraldehyde-3-phosphate (G3P). This is Triosephosphate isomerase from Francisella philomiragia subsp. philomiragia (strain ATCC 25017 / CCUG 19701 / FSC 153 / O#319-036).